We begin with the raw amino-acid sequence, 143 residues long: Large ribosomal subunit protein uL11 (143 aa).

It belongs to the universal ribosomal protein uL11 family. In terms of assembly, part of the ribosomal stalk of the 50S ribosomal subunit. Interacts with L10 and the large rRNA to form the base of the stalk. L10 forms an elongated spine to which L12 dimers bind in a sequential fashion forming a multimeric L10(L12)X complex. One or more lysine residues are methylated.

Functionally, forms part of the ribosomal stalk which helps the ribosome interact with GTP-bound translation factors. The chain is Large ribosomal subunit protein uL11 from Chromobacterium violaceum (strain ATCC 12472 / DSM 30191 / JCM 1249 / CCUG 213 / NBRC 12614 / NCIMB 9131 / NCTC 9757 / MK).